Here is a 477-residue protein sequence, read N- to C-terminus: Cysteine--tRNA ligase (477 aa).

Cys42 is a binding site for Zn(2+). The 'HIGH' region motif lies at 44–54 (ATVQGLPHIGH). Cys220, His245, and Glu249 together coordinate Zn(2+). Positions 276 to 280 (KMSKS) match the 'KMSKS' region motif. Lys279 lines the ATP pocket.

Belongs to the class-I aminoacyl-tRNA synthetase family. As to quaternary structure, monomer. Requires Zn(2+) as cofactor.

The protein localises to the cytoplasm. It carries out the reaction tRNA(Cys) + L-cysteine + ATP = L-cysteinyl-tRNA(Cys) + AMP + diphosphate. The polypeptide is Cysteine--tRNA ligase (Mycolicibacterium smegmatis (strain ATCC 700084 / mc(2)155) (Mycobacterium smegmatis)).